A 92-amino-acid polypeptide reads, in one-letter code: Small ribosomal subunit protein uS19 (92 aa).

This sequence belongs to the universal ribosomal protein uS19 family.

Functionally, protein S19 forms a complex with S13 that binds strongly to the 16S ribosomal RNA. This Bacillus cereus (strain B4264) protein is Small ribosomal subunit protein uS19.